The primary structure comprises 237 residues: MQISSLSPPEIVAVLPAAGNGSRMQNDRPKQYLTIGNDATGHKTILEHTIDALLRHSRVQRVVVVISPDDTFFHTLAIANDPRICAVTGGKLRADSVLAGLAVVADSAWALVHDAARPCLHQDDLTRLLAIVEQSDVGGILAAPVRDTMKRSTDGFIDRTVERNDLWHALTPQLFPAALLKQCLQRALQDGVAVTDEASALEYCGYRPQIISGRSDNIKVTRPEDLALAEFYLTRLQ.

It belongs to the IspD/TarI cytidylyltransferase family. IspD subfamily. Homodimer.

The catalysed reaction is 2-C-methyl-D-erythritol 4-phosphate + CTP + H(+) = 4-CDP-2-C-methyl-D-erythritol + diphosphate. It functions in the pathway isoprenoid biosynthesis; isopentenyl diphosphate biosynthesis via DXP pathway; isopentenyl diphosphate from 1-deoxy-D-xylulose 5-phosphate: step 2/6. Catalyzes the formation of 4-diphosphocytidyl-2-C-methyl-D-erythritol from CTP and 2-C-methyl-D-erythritol 4-phosphate (MEP). In Pectobacterium atrosepticum (strain SCRI 1043 / ATCC BAA-672) (Erwinia carotovora subsp. atroseptica), this protein is 2-C-methyl-D-erythritol 4-phosphate cytidylyltransferase.